Consider the following 365-residue polypeptide: Aminomethyltransferase (365 aa).

Belongs to the GcvT family. In terms of assembly, the glycine cleavage system is composed of four proteins: P, T, L and H.

It carries out the reaction N(6)-[(R)-S(8)-aminomethyldihydrolipoyl]-L-lysyl-[protein] + (6S)-5,6,7,8-tetrahydrofolate = N(6)-[(R)-dihydrolipoyl]-L-lysyl-[protein] + (6R)-5,10-methylene-5,6,7,8-tetrahydrofolate + NH4(+). The glycine cleavage system catalyzes the degradation of glycine. This Geobacillus thermodenitrificans (strain NG80-2) protein is Aminomethyltransferase.